Here is a 366-residue protein sequence, read N- to C-terminus: Inactive protein RESTRICTED TEV MOVEMENT 2 (366 aa).

In terms of domain architecture, sHSP spans 14–121; the sequence is VQYEDFVPKS…LPETSRTEAA (108 aa). The A-1 repeat unit spans residues 129–133; sequence LEEKR. Residues 129–220 are 6 X 5 AA repeats A of L-E-E-[SKR]-[ERK]; sequence LEEKRLLEES…LEERRLEERK (92 aa). The A-2 repeat unit spans residues 135 to 139; that stretch reads LEESR. Residues 156 to 160 form an A-3 repeat; sequence LEEKE. The stretch at 163–176 is one B-1 repeat; sequence IRKLQEEAKAKEEA. The tract at residues 163 to 206 is 3 X 14 AA repeats B of [IMA]-[RK]-K-L-Q-E-E-A-K-A-K-E-[EK]-[LA]; sequence IRKLQEEAKAKEEAEMRKLQEEAKANEEAAAKKLQEEIEAKEKL. The stretch at 178 to 191 is one B-2 repeat; it reads MRKLQEEAKANEEA. A B-3 repeat occupies 193-205; that stretch reads AKKLQEEIEAKEK. An A-4 repeat occupies 206 to 210; it reads LEERK. The stretch at 211 to 215 is one A-5 repeat; sequence LEERR. The A-6 repeat unit spans residues 216–220; sequence LEERK. The chain crosses the membrane as a helical span at residues 322-342; sequence LMMNVGVAALVIFALGAYVSY. The tract at residues 345–366 is disordered; that stretch reads CSSSSSSSSSSPSSSSSSTKPE. The span at 346-366 shows a compositional bias: low complexity; sequence SSSSSSSSSSPSSSSSSTKPE.

This sequence belongs to the small heat shock protein (HSP20) family.

The protein localises to the cell membrane. Functionally, seems to not be involved in heat resistance. Unable to mediate restriction of long-distance movement of the pathogenic tobacco etch virus (TEV) without causing a hypersensitive response or inducing systemic acquired resistance. The sequence is that of Inactive protein RESTRICTED TEV MOVEMENT 2 (RTM2) from Arabidopsis thaliana (Mouse-ear cress).